The primary structure comprises 964 residues: E3 ubiquitin-protein ligase TRIM37 (964 aa).

Met-1 carries the post-translational modification N-acetylmethionine. The RING-type; degenerate zinc finger occupies 15–55; it reads CFICMEKLRDARLCPHCSKLCCFSCIRRWLTEQRAQCPHCR. Residues 90 to 132 form a B box-type zinc finger; that stretch reads NEKDKCENHHEKLSVFCWTCKKCICHQCALWGGMHGGHTFKPL. The Zn(2+) site is built by Cys-95, His-98, Cys-117, and His-124. Residues 132–234 are a coiled coil; sequence LAEIYEQHVT…VEHQLRSCSK (103 aa). The region spanning 276–403 is the MATH domain; sequence YDSATFVLEN…NDTVILRFQV (128 aa). Residues 419 to 450 adopt a coiled-coil conformation; it reads ITQLEAAQTSYIQQINNLKERLTIELSRTQKS. Ser-454 is subject to Phosphoserine. 3 disordered regions span residues 477-513, 530-554, and 640-663; these read CSDMLLEGGPTTASVREAKEDEEDEEKIQNEDYHHEL, QLDGSSSSASSTATSNTEENDIDEE, and RPPASLLQPTASYSRKDKDQRKQQ. The segment covering 503–513 has biased composition (basic and acidic residues); it reads KIQNEDYHHEL. Over residues 534–544 the composition is skewed to low complexity; it reads SSSSASSTATS. Residues 673-700 adopt a coiled-coil conformation; the sequence is KMLKRLKTQMAEVRCMKTDVKNTLSEIK. Residues 752–761 show a composition bias toward polar residues; the sequence is NSTNKKSNSP. 2 disordered regions span residues 752-812 and 891-964; these read NSTN…SPRA and GASA…NSGR. Residues 776-788 show a composition bias toward basic and acidic residues; it reads RAVDPGENSRSKG. A compositionally biased stretch (low complexity) spans 794 to 807; the sequence is SEGSPGSSQSGSRH. Over residues 904–916 the composition is skewed to acidic residues; the sequence is SDIECDTENEEQE. Over residues 955–964 the composition is skewed to polar residues; that stretch reads SFNTDENSGR.

It belongs to the TRIM/RBCC family. As to quaternary structure, associates with the PRC2/EED-EZH2 complex. Post-translationally, auto-ubiquitinated. Ubiquitous. Highly expressed in testis, while it is weakly expressed in other tissues.

It localises to the chromosome. It is found in the cytoplasm. The protein localises to the perinuclear region. Its subcellular location is the peroxisome membrane. The enzyme catalyses S-ubiquitinyl-[E2 ubiquitin-conjugating enzyme]-L-cysteine + [acceptor protein]-L-lysine = [E2 ubiquitin-conjugating enzyme]-L-cysteine + N(6)-ubiquitinyl-[acceptor protein]-L-lysine.. It functions in the pathway protein modification; protein ubiquitination. Functionally, E3 ubiquitin-protein ligase required to prevent centriole reduplication. Probably acts by ubiquitinating positive regulators of centriole reduplication. Mediates monoubiquitination of 'Lys-119' of histone H2A (H2AK119Ub), a specific tag for epigenetic transcriptional repression: associates with some Polycomb group (PcG) multiprotein PRC2-like complex and mediates repression of target genes. Also acts as a positive regulator of peroxisome import by mediating monoubiquitination of PEX5 at 'Lys-472': monoubiquitination promotes PEX5 stabilitation by preventing its polyubiquitination and degradation by the proteasome. Has anti-HIV activity. The chain is E3 ubiquitin-protein ligase TRIM37 from Homo sapiens (Human).